Reading from the N-terminus, the 233-residue chain is NAD-dependent protein deacylase (233 aa).

Residues 1-230 (MKNIMILSGA…ALDIENFMKD (230 aa)) enclose the Deacetylase sirtuin-type domain. 9-28 (GAGLSAPSGLKTFRDNDGLW) is a binding site for NAD(+). Substrate-binding residues include Tyr-53 and Arg-56. 88-91 (QNVD) is a binding site for NAD(+). His-106 functions as the Proton acceptor in the catalytic mechanism. Cys-114, Cys-117, Cys-133, and Cys-136 together coordinate Zn(2+). NAD(+) contacts are provided by residues 172 to 174 (GTS) and 200 to 202 (NLE).

This sequence belongs to the sirtuin family. Class III subfamily. Zn(2+) is required as a cofactor.

The protein resides in the cytoplasm. The catalysed reaction is N(6)-acetyl-L-lysyl-[protein] + NAD(+) + H2O = 2''-O-acetyl-ADP-D-ribose + nicotinamide + L-lysyl-[protein]. The enzyme catalyses N(6)-succinyl-L-lysyl-[protein] + NAD(+) + H2O = 2''-O-succinyl-ADP-D-ribose + nicotinamide + L-lysyl-[protein]. In terms of biological role, NAD-dependent lysine deacetylase and desuccinylase that specifically removes acetyl and succinyl groups on target proteins. Modulates the activities of several proteins which are inactive in their acylated form. The polypeptide is NAD-dependent protein deacylase (Campylobacter jejuni subsp. jejuni serotype O:2 (strain ATCC 700819 / NCTC 11168)).